A 197-amino-acid chain; its full sequence is Large ribosomal subunit protein bL25 (197 aa).

The protein belongs to the bacterial ribosomal protein bL25 family. CTC subfamily. Part of the 50S ribosomal subunit; part of the 5S rRNA/L5/L18/L25 subcomplex. Contacts the 5S rRNA. Binds to the 5S rRNA independently of L5 and L18.

Functionally, this is one of the proteins that binds to the 5S RNA in the ribosome where it forms part of the central protuberance. The polypeptide is Large ribosomal subunit protein bL25 (Carboxydothermus hydrogenoformans (strain ATCC BAA-161 / DSM 6008 / Z-2901)).